The sequence spans 195 residues: ATP-dependent Clp protease proteolytic subunit (195 aa).

Residue Ser-97 is the Nucleophile of the active site. His-122 is an active-site residue.

This sequence belongs to the peptidase S14 family. In terms of assembly, fourteen ClpP subunits assemble into 2 heptameric rings which stack back to back to give a disk-like structure with a central cavity, resembling the structure of eukaryotic proteasomes.

Its subcellular location is the cytoplasm. It catalyses the reaction Hydrolysis of proteins to small peptides in the presence of ATP and magnesium. alpha-casein is the usual test substrate. In the absence of ATP, only oligopeptides shorter than five residues are hydrolyzed (such as succinyl-Leu-Tyr-|-NHMec, and Leu-Tyr-Leu-|-Tyr-Trp, in which cleavage of the -Tyr-|-Leu- and -Tyr-|-Trp bonds also occurs).. Cleaves peptides in various proteins in a process that requires ATP hydrolysis. Has a chymotrypsin-like activity. Plays a major role in the degradation of misfolded proteins. The chain is ATP-dependent Clp protease proteolytic subunit from Lactobacillus acidophilus (strain ATCC 700396 / NCK56 / N2 / NCFM).